The sequence spans 288 residues: Glycine--tRNA ligase alpha subunit (288 aa).

This sequence belongs to the class-II aminoacyl-tRNA synthetase family. In terms of assembly, tetramer of two alpha and two beta subunits.

Its subcellular location is the cytoplasm. It catalyses the reaction tRNA(Gly) + glycine + ATP = glycyl-tRNA(Gly) + AMP + diphosphate. The polypeptide is Glycine--tRNA ligase alpha subunit (Rickettsia peacockii (strain Rustic)).